A 322-amino-acid chain; its full sequence is Transaldolase (322 aa).

Lys136 functions as the Schiff-base intermediate with substrate in the catalytic mechanism.

The protein belongs to the transaldolase family. Type 1 subfamily. In terms of assembly, homodimer.

The protein resides in the cytoplasm. The enzyme catalyses D-sedoheptulose 7-phosphate + D-glyceraldehyde 3-phosphate = D-erythrose 4-phosphate + beta-D-fructose 6-phosphate. It functions in the pathway carbohydrate degradation; pentose phosphate pathway; D-glyceraldehyde 3-phosphate and beta-D-fructose 6-phosphate from D-ribose 5-phosphate and D-xylulose 5-phosphate (non-oxidative stage): step 2/3. Its function is as follows. Transaldolase is important for the balance of metabolites in the pentose-phosphate pathway. The protein is Transaldolase of Xanthomonas oryzae pv. oryzae (strain PXO99A).